We begin with the raw amino-acid sequence, 313 residues long: Olfactory receptor 6E1 (313 aa).

Asn-3 carries an N-linked (GlcNAc...) asparagine glycan. 7 consecutive transmembrane segments (helical) span residues 25–45, 64–84, 96–116, 142–162, 192–212, 238–258, and 271–291; these read IFLG…LIIF, FAML…TNII, FLQA…LAVM, LVFC…SIVF, LVEF…LAVT, TCSS…FMYV, and KVVA…IYTL. Cys-95 and Cys-177 are oxidised to a cystine.

The protein belongs to the G-protein coupled receptor 1 family.

It localises to the cell membrane. Its function is as follows. Odorant receptor. Activated by (-)-citronellal and to a lesser extent by (+)-citronellal. Not activated by carvone or limonene. The sequence is that of Olfactory receptor 6E1 from Mus musculus (Mouse).